Here is a 327-residue protein sequence, read N- to C-terminus: Olfactory receptor 51T1 (327 aa).

Residues methionine 1–valine 27 lie on the Extracellular side of the membrane. Asparagine 5 and asparagine 6 each carry an N-linked (GlcNAc...) asparagine glycan. A helical transmembrane segment spans residues tryptophan 28–phenylalanine 48. The Cytoplasmic portion of the chain corresponds to leucine 49 to arginine 56. Residues leucine 57–isoleucine 77 traverse the membrane as a helical segment. The Extracellular segment spans residues threonine 78–isoleucine 101. A helical membrane pass occupies residues glutamine 102–phenylalanine 122. At aspartate 123–arginine 141 the chain is on the cytoplasmic side. The chain crosses the membrane as a helical span at residues methionine 142 to leucine 162. Over valine 163–serine 198 the chain is Extracellular. A helical membrane pass occupies residues phenylalanine 199–serine 219. The Cytoplasmic segment spans residues tyrosine 220–alanine 239. A helical transmembrane segment spans residues leucine 240–leucine 260. Residues serine 261–cysteine 275 are Extracellular-facing. A helical membrane pass occupies residues serine 276–leucine 296. The Cytoplasmic portion of the chain corresponds to lysine 297–aspartate 327.

This sequence belongs to the G-protein coupled receptor 1 family.

The protein localises to the cell membrane. Its function is as follows. Odorant receptor. In Homo sapiens (Human), this protein is Olfactory receptor 51T1 (OR51T1).